A 1106-amino-acid polypeptide reads, in one-letter code: Probable ATP-citrate synthase (1106 aa).

Citrate is bound by residues Asn-358, Thr-360, and Arg-391. A compositionally biased stretch (polar residues) spans 442 to 459 (APQTTGQFLLSPERNTGG). The segment at 442–478 (APQTTGQFLLSPERNTGGTERAPPSPAANATPTEHPL) is disordered. Residues 701–721 (VIRY…EVGG) and 752–778 (ITSE…KNAA) each bind ATP. Glu-718 provides a ligand contact to Mg(2+). His-760 functions as the Tele-phosphohistidine intermediate in the catalytic mechanism. 779–789 (LRASGALVPES) lines the CoA pocket.

The protein in the N-terminal section; belongs to the succinate/malate CoA ligase beta subunit family. This sequence in the C-terminal section; belongs to the succinate/malate CoA ligase alpha subunit family. Homotetramer.

The protein localises to the cytoplasm. The enzyme catalyses oxaloacetate + acetyl-CoA + ADP + phosphate = citrate + ATP + CoA. In terms of biological role, catalyzes the cleavage of citrate into oxaloacetate and acetyl-CoA, the latter serving as common substrate in multiple biochemical reactions in protein, carbohydrate and lipid metabolism. The sequence is that of Probable ATP-citrate synthase from Caenorhabditis elegans.